The sequence spans 246 residues: Probable transcriptional regulatory protein WP1214 (246 aa).

Residues 1–22 (MAGHSQFSNIKHRKGAQDAKRS) are disordered.

This sequence belongs to the TACO1 family.

It is found in the cytoplasm. The protein is Probable transcriptional regulatory protein WP1214 of Wolbachia pipientis subsp. Culex pipiens (strain wPip).